The primary structure comprises 260 residues: Imidazole glycerol phosphate synthase subunit HisF (260 aa).

Catalysis depends on residues Asp11 and Asp130.

It belongs to the HisA/HisF family. As to quaternary structure, heterodimer of HisH and HisF.

The protein resides in the cytoplasm. It carries out the reaction 5-[(5-phospho-1-deoxy-D-ribulos-1-ylimino)methylamino]-1-(5-phospho-beta-D-ribosyl)imidazole-4-carboxamide + L-glutamine = D-erythro-1-(imidazol-4-yl)glycerol 3-phosphate + 5-amino-1-(5-phospho-beta-D-ribosyl)imidazole-4-carboxamide + L-glutamate + H(+). It participates in amino-acid biosynthesis; L-histidine biosynthesis; L-histidine from 5-phospho-alpha-D-ribose 1-diphosphate: step 5/9. Its function is as follows. IGPS catalyzes the conversion of PRFAR and glutamine to IGP, AICAR and glutamate. The HisF subunit catalyzes the cyclization activity that produces IGP and AICAR from PRFAR using the ammonia provided by the HisH subunit. The sequence is that of Imidazole glycerol phosphate synthase subunit HisF from Endomicrobium trichonymphae.